A 179-amino-acid polypeptide reads, in one-letter code: Large ribosomal subunit protein uL5 (179 aa).

Belongs to the universal ribosomal protein uL5 family. Part of the 50S ribosomal subunit; part of the 5S rRNA/L5/L18/L25 subcomplex. Contacts the 5S rRNA and the P site tRNA. Forms a bridge to the 30S subunit in the 70S ribosome.

In terms of biological role, this is one of the proteins that bind and probably mediate the attachment of the 5S RNA into the large ribosomal subunit, where it forms part of the central protuberance. In the 70S ribosome it contacts protein S13 of the 30S subunit (bridge B1b), connecting the 2 subunits; this bridge is implicated in subunit movement. Contacts the P site tRNA; the 5S rRNA and some of its associated proteins might help stabilize positioning of ribosome-bound tRNAs. The chain is Large ribosomal subunit protein uL5 from Prochlorococcus marinus (strain AS9601).